The sequence spans 493 residues: Proline--tRNA ligase (493 aa).

It belongs to the class-II aminoacyl-tRNA synthetase family. ProS type 3 subfamily. In terms of assembly, homodimer.

Its subcellular location is the cytoplasm. The enzyme catalyses tRNA(Pro) + L-proline + ATP = L-prolyl-tRNA(Pro) + AMP + diphosphate. Its function is as follows. Catalyzes the attachment of proline to tRNA(Pro) in a two-step reaction: proline is first activated by ATP to form Pro-AMP and then transferred to the acceptor end of tRNA(Pro). The chain is Proline--tRNA ligase from Azobacteroides pseudotrichonymphae genomovar. CFP2.